The sequence spans 519 residues: 2-isopropylmalate synthase (519 aa).

Residues 5-267 form the Pyruvate carboxyltransferase domain; that stretch reads VIIFDTTLRD…QTRINHKEIY (263 aa). Mn(2+) is bound by residues Asp-14, His-202, His-204, and Asn-238. The tract at residues 392-519 is regulatory domain; sequence VMNYFNTQSG…RKHHTTQEAV (128 aa).

It belongs to the alpha-IPM synthase/homocitrate synthase family. LeuA type 1 subfamily. Homodimer. Requires Mn(2+) as cofactor.

The protein resides in the cytoplasm. It catalyses the reaction 3-methyl-2-oxobutanoate + acetyl-CoA + H2O = (2S)-2-isopropylmalate + CoA + H(+). Its pathway is amino-acid biosynthesis; L-leucine biosynthesis; L-leucine from 3-methyl-2-oxobutanoate: step 1/4. Catalyzes the condensation of the acetyl group of acetyl-CoA with 3-methyl-2-oxobutanoate (2-ketoisovalerate) to form 3-carboxy-3-hydroxy-4-methylpentanoate (2-isopropylmalate). In Proteus mirabilis (strain HI4320), this protein is 2-isopropylmalate synthase.